We begin with the raw amino-acid sequence, 440 residues long: DNA polymerase delta small subunit (440 aa).

The protein belongs to the DNA polymerase delta/II small subunit family. As to quaternary structure, heterodimer with subunits of 125 kDa and 50 kDa.

It is found in the nucleus. It catalyses the reaction DNA(n) + a 2'-deoxyribonucleoside 5'-triphosphate = DNA(n+1) + diphosphate. Its function is as follows. The function of the small subunit is not yet clear. The sequence is that of DNA polymerase delta small subunit (POLD2) from Arabidopsis thaliana (Mouse-ear cress).